We begin with the raw amino-acid sequence, 591 residues long: L-fucose isomerase (591 aa).

Active-site proton acceptor residues include glutamate 337 and aspartate 361. Residues glutamate 337, aspartate 361, and histidine 528 each coordinate Mn(2+).

It belongs to the L-fucose isomerase family. As to quaternary structure, homohexamer. Mn(2+) is required as a cofactor.

It localises to the cytoplasm. It carries out the reaction L-fucose = L-fuculose. The protein operates within carbohydrate degradation; L-fucose degradation; L-lactaldehyde and glycerone phosphate from L-fucose: step 1/3. Converts the aldose L-fucose into the corresponding ketose L-fuculose. The sequence is that of L-fucose isomerase from Escherichia coli (strain SMS-3-5 / SECEC).